A 65-amino-acid polypeptide reads, in one-letter code: Large ribosomal subunit protein uL29c (65 aa).

Belongs to the universal ribosomal protein uL29 family.

The protein localises to the plastid. It localises to the chloroplast. The protein is Large ribosomal subunit protein uL29c (rpl29) of Guillardia theta (Cryptophyte).